The following is a 115-amino-acid chain: Large ribosomal subunit protein bL20 (115 aa).

The protein belongs to the bacterial ribosomal protein bL20 family.

In terms of biological role, binds directly to 23S ribosomal RNA and is necessary for the in vitro assembly process of the 50S ribosomal subunit. It is not involved in the protein synthesizing functions of that subunit. The sequence is that of Large ribosomal subunit protein bL20 from Synechococcus sp. (strain CC9311).